The chain runs to 828 residues: Fibroblast growth factor receptor 4 (828 aa).

Residues 1–31 (MSGSIRRSYTAMQNFPRFLLGVLFVATLSSC) form the signal peptide. Residues 32–392 (RPRLSEDEAN…AEPAESRYMD (361 aa)) are Extracellular-facing. The Ig-like C2-type 1 domain occupies 33-127 (PRLSEDEANW…GKILRRFSIS (95 aa)). A disulfide bridge links cysteine 67 with cysteine 112. Residue asparagine 70 is glycosylated (N-linked (GlcNAc...) asparagine). Positions 132-156 (LASGDEEEEEEDDDDEDGRREDTTA) are disordered. The span at 135 to 147 (GDEEEEEEDDDDE) shows a compositional bias: acidic residues. 2 Ig-like C2-type domains span residues 169–259 (PYWT…LTYT) and 272–372 (PILQ…AWLT). A disulfide bridge connects residues cysteine 194 and cysteine 247. N-linked (GlcNAc...) asparagine glycans are attached at residues asparagine 244, asparagine 281, asparagine 313, and asparagine 345. An intrachain disulfide couples cysteine 294 to cysteine 356. Residues 393–413 (IIIYTSGFLAVAMAIMIVILC) traverse the membrane as a helical segment. Topologically, residues 414–828 (RMQTPHSKQT…YHNIHSQLGT (415 aa)) are cytoplasmic. In terms of domain architecture, Protein kinase spans 490 to 777 (LVLGKPLGEG…ILTAVSEEYL (288 aa)). ATP is bound by residues 496-504 (LGEGCFGQV) and lysine 526. Aspartate 635 acts as the Proton acceptor in catalysis. Residues tyrosine 665, tyrosine 666, and tyrosine 776 each carry the phosphotyrosine; by autocatalysis modification.

It belongs to the protein kinase superfamily. Tyr protein kinase family. Fibroblast growth factor receptor subfamily. In terms of processing, ubiquitinated. Subject to proteasomal degradation when not fully glycosylated. Post-translationally, autophosphorylated. Binding of FGF family members together with heparan sulfate proteoglycan or heparin promotes receptor dimerization and autophosphorylation on tyrosine residues. Autophosphorylation occurs in trans between the two FGFR molecules present in the dimer.

It localises to the cell membrane. Its subcellular location is the endosome. The protein resides in the endoplasmic reticulum. It carries out the reaction L-tyrosyl-[protein] + ATP = O-phospho-L-tyrosyl-[protein] + ADP + H(+). Present in an inactive conformation in the absence of bound ligand. Ligand binding leads to dimerization and activation by autophosphorylation on tyrosine residues. In terms of biological role, tyrosine-protein kinase that acts as a cell-surface receptor for fibroblast growth factors and plays a role in the regulation of cell proliferation, differentiation and migration, and in regulation of lipid metabolism, bile acid biosynthesis, glucose uptake, vitamin D metabolism and phosphate homeostasis. Required for normal down-regulation of the expression of CYP7A1, the rate-limiting enzyme in bile acid synthesis, in response to FGF19. Phosphorylates PLCG1 and FRS2. Ligand binding leads to the activation of several signaling cascades. Activation of PLCG1 leads to the production of the cellular signaling molecules diacylglycerol and inositol 1,4,5-trisphosphate. Phosphorylation of FRS2 triggers recruitment of GRB2, GAB1, PIK3R1 and SOS1, and mediates activation of RAS, MAPK1/ERK2, MAPK3/ERK1 and the MAP kinase signaling pathway, as well as of the AKT1 signaling pathway. The chain is Fibroblast growth factor receptor 4 (fgfr4) from Xenopus laevis (African clawed frog).